The primary structure comprises 566 residues: Membrane protein insertase YidC (566 aa).

The helical transmembrane segment at 7 to 27 (ILIVALAIVSYVMVLKWNQDY) threads the bilayer. The interval 38–72 (ASSTTAPGLPDAPTGTSAANDDIPRAASDTTAPAE) is disordered. 5 consecutive transmembrane segments (helical) span residues 347–367 (LELT…FWLL), 373–393 (LVGN…GIFF), 443–463 (LGGC…YWVL), 474–494 (FMLW…PIIM), and 521–541 (PIIF…YWVV).

The protein belongs to the OXA1/ALB3/YidC family. Type 1 subfamily. Interacts with the Sec translocase complex via SecD. Specifically interacts with transmembrane segments of nascent integral membrane proteins during membrane integration.

It is found in the cell inner membrane. In terms of biological role, required for the insertion and/or proper folding and/or complex formation of integral membrane proteins into the membrane. Involved in integration of membrane proteins that insert both dependently and independently of the Sec translocase complex, as well as at least some lipoproteins. Aids folding of multispanning membrane proteins. This Pseudomonas fluorescens (strain ATCC BAA-477 / NRRL B-23932 / Pf-5) protein is Membrane protein insertase YidC.